We begin with the raw amino-acid sequence, 314 residues long: Ribosomal protein L11 methyltransferase (314 aa).

Residues Thr166, Gly187, Asp209, and Asn251 each contribute to the S-adenosyl-L-methionine site.

This sequence belongs to the methyltransferase superfamily. PrmA family.

Its subcellular location is the cytoplasm. It catalyses the reaction L-lysyl-[protein] + 3 S-adenosyl-L-methionine = N(6),N(6),N(6)-trimethyl-L-lysyl-[protein] + 3 S-adenosyl-L-homocysteine + 3 H(+). In terms of biological role, methylates ribosomal protein L11. The protein is Ribosomal protein L11 methyltransferase of Clostridium tetani (strain Massachusetts / E88).